A 286-amino-acid polypeptide reads, in one-letter code: Small ribosomal subunit protein uS2 (286 aa).

The disordered stretch occupies residues 257–286 (KDNKSNKSNTINADENIKESDLIGGSNNEG).

This sequence belongs to the universal ribosomal protein uS2 family.

The protein is Small ribosomal subunit protein uS2 of Ehrlichia ruminantium (strain Gardel).